The sequence spans 296 residues: MTIATASARARPSSLQYAKDLLLLAKPRLSGLVIVTSAGGLALAPGHVAPARAALTVLATAAVVGAANALNCWMEREIDARMRRTRDRPLPAGRVDPFTALGLGIMVPVFALPVLALVANPLTAALAFVALVTYVAVYTPMKQRSTLALLVGAVPGAIPPLMGWTAATGRLDAGGLALFALLFAWQLPHFLAVSIYLRDDYARGGLRVFSIVHGERTTRAWIAATAAALVPVSLLLVPLRVAGPSYGAVAAVLGVALAGYAFAGVGREGGRWARNFFLATILYLTLLFVALFLGAR.

9 helical membrane-spanning segments follow: residues Leu-29–Ala-49, Ala-54–Met-74, Phe-98–Val-118, Pro-121–Met-141, Leu-147–Ala-167, Gly-175–Ile-195, Trp-221–Val-241, Tyr-246–Gly-266, and Asn-275–Ala-295.

Belongs to the UbiA prenyltransferase family. Protoheme IX farnesyltransferase subfamily.

It localises to the cell inner membrane. It carries out the reaction heme b + (2E,6E)-farnesyl diphosphate + H2O = Fe(II)-heme o + diphosphate. The protein operates within porphyrin-containing compound metabolism; heme O biosynthesis; heme O from protoheme: step 1/1. Functionally, converts heme B (protoheme IX) to heme O by substitution of the vinyl group on carbon 2 of heme B porphyrin ring with a hydroxyethyl farnesyl side group. In Anaeromyxobacter sp. (strain Fw109-5), this protein is Protoheme IX farnesyltransferase.